Here is a 315-residue protein sequence, read N- to C-terminus: ATP synthase gamma chain (315 aa).

The protein belongs to the ATPase gamma chain family. F-type ATPases have 2 components, CF(1) - the catalytic core - and CF(0) - the membrane proton channel. CF(1) has five subunits: alpha(3), beta(3), gamma(1), delta(1), epsilon(1). CF(0) has three main subunits: a, b and c.

The protein resides in the cellular thylakoid membrane. Produces ATP from ADP in the presence of a proton gradient across the membrane. The gamma chain is believed to be important in regulating ATPase activity and the flow of protons through the CF(0) complex. In Nostoc sp. (strain PCC 7120 / SAG 25.82 / UTEX 2576), this protein is ATP synthase gamma chain.